A 413-amino-acid polypeptide reads, in one-letter code: CinA-like protein (413 aa).

The protein belongs to the CinA family.

The sequence is that of CinA-like protein from Desulfosudis oleivorans (strain DSM 6200 / JCM 39069 / Hxd3) (Desulfococcus oleovorans).